Consider the following 48-residue polypeptide: Palustrin-3b (48 aa).

Cysteine 43 and cysteine 48 are joined by a disulfide.

As to expression, expressed by the skin glands.

It is found in the secreted. Functionally, antimicrobial activity against Gram-negative bacterium E.coli. In Lithobates palustris (Pickerel frog), this protein is Palustrin-3b.